The following is a 273-amino-acid chain: 4-hydroxy-tetrahydrodipicolinate reductase (273 aa).

Residues 12–17 and glutamate 38 each bind NAD(+); that span reads GAGGRM. Residue arginine 39 coordinates NADP(+). Residues 102-104 and 126-129 contribute to the NAD(+) site; these read GTT and AANF. Residue histidine 159 is the Proton donor/acceptor of the active site. A (S)-2,3,4,5-tetrahydrodipicolinate-binding site is contributed by histidine 160. Lysine 163 (proton donor) is an active-site residue. A (S)-2,3,4,5-tetrahydrodipicolinate-binding site is contributed by 169–170; sequence GT.

The protein belongs to the DapB family. In terms of assembly, homotetramer.

The protein localises to the cytoplasm. The enzyme catalyses (S)-2,3,4,5-tetrahydrodipicolinate + NAD(+) + H2O = (2S,4S)-4-hydroxy-2,3,4,5-tetrahydrodipicolinate + NADH + H(+). It catalyses the reaction (S)-2,3,4,5-tetrahydrodipicolinate + NADP(+) + H2O = (2S,4S)-4-hydroxy-2,3,4,5-tetrahydrodipicolinate + NADPH + H(+). Its pathway is amino-acid biosynthesis; L-lysine biosynthesis via DAP pathway; (S)-tetrahydrodipicolinate from L-aspartate: step 4/4. Functionally, catalyzes the conversion of 4-hydroxy-tetrahydrodipicolinate (HTPA) to tetrahydrodipicolinate. The protein is 4-hydroxy-tetrahydrodipicolinate reductase of Shigella boydii serotype 4 (strain Sb227).